A 128-amino-acid chain; its full sequence is Protein BEX1 (128 aa).

Residues 1 to 55 (MESKDQGAKNLNMENDHQKKEEKEEKPQDTIKREPVVAPTFEAGKNCAPRGGRRR) form a disordered region. A compositionally biased stretch (basic and acidic residues) spans 14 to 35 (ENDHQKKEEKEEKPQDTIKREP). S105 bears the Phosphoserine; by PKB/AKT1 mark. Residues 107–128 (SLRAVSTDPPHHDHHDEFCLMP) form a disordered region. Positions 115–128 (PPHHDHHDEFCLMP) are enriched in basic and acidic residues. The his cluster stretch occupies residues 117–121 (HHDHH). Residue C125 coordinates Zn(2+).

It belongs to the BEX family. Interacts with neurotrophin receptor p75NTR/NGFR. Interacts with OMP. Phosphorylated. Phosphorylation of Ser-105 protects it from the proteasome. In terms of processing, ubiquitinated. Degraded by the proteasome. Expressed in the central nervous system. Expressed in Schwann cells from newborn sciatic nerve.

It is found in the nucleus. The protein resides in the cytoplasm. Functionally, signaling adapter molecule involved in p75NTR/NGFR signaling. Plays a role in cell cycle progression and neuronal differentiation. Inhibits neuronal differentiation in response to nerve growth factor (NGF). May act as a link between the cell cycle and neurotrophic factor signaling, possibly by functioning as an upstream modulator of receptor signaling, coordinating biological responses to external signals with internal cellular states. In absence of reductive stress, acts as a pseudosubstrate for the CRL2(FEM1B) complex: associates with FEM1B via zinc, thereby preventing association between FEM1B and its substrates. This chain is Protein BEX1 (Bex1), found in Rattus norvegicus (Rat).